Consider the following 102-residue polypeptide: 10 kDa heat shock protein, mitochondrial (102 aa).

The protein belongs to the GroES chaperonin family. Homohexamer.

It is found in the mitochondrion matrix. Eukaryotic CPN10 homolog which is essential for mitochondrial protein biogenesis, together with CPN60. Binds to CPN60 in the presence of Mg-ATP and suppresses the ATPase activity of the latter. In Schistosoma japonicum (Blood fluke), this protein is 10 kDa heat shock protein, mitochondrial.